We begin with the raw amino-acid sequence, 384 residues long: Cytochrome b (384 aa).

4 helical membrane-spanning segments follow: residues 32 to 52 (VGSL…FLAM), 76 to 98 (WLIR…LHIG), 113 to 133 (LWVI…MGYC), and 179 to 199 (FFAL…MHLM). Residues His82 and His96 each coordinate heme b. His183 and His197 together coordinate heme b. His202 contributes to the a ubiquinone binding site. The next 4 membrane-spanning stretches (helical) occupy residues 225–245 (FIFK…LFVF), 289–309 (LGGV…PYTD), 321–341 (LSKF…NLGQ), and 348–368 (YIEL…LIVP).

The protein belongs to the cytochrome b family. Fungal cytochrome b-c1 complex contains 10 subunits; 3 respiratory subunits, 2 core proteins and 5 low-molecular weight proteins. Cytochrome b-c1 complex is a homodimer. It depends on heme b as a cofactor.

It is found in the mitochondrion inner membrane. Functionally, component of the ubiquinol-cytochrome c reductase complex (complex III or cytochrome b-c1 complex) that is part of the mitochondrial respiratory chain. The b-c1 complex mediates electron transfer from ubiquinol to cytochrome c. Contributes to the generation of a proton gradient across the mitochondrial membrane that is then used for ATP synthesis. This Candida parapsilosis (Yeast) protein is Cytochrome b (COB).